We begin with the raw amino-acid sequence, 103 residues long: Large ribosomal subunit protein bL21 (103 aa).

The protein belongs to the bacterial ribosomal protein bL21 family. In terms of assembly, part of the 50S ribosomal subunit. Contacts protein L20.

Functionally, this protein binds to 23S rRNA in the presence of protein L20. The chain is Large ribosomal subunit protein bL21 from Cupriavidus pinatubonensis (strain JMP 134 / LMG 1197) (Cupriavidus necator (strain JMP 134)).